A 258-amino-acid chain; its full sequence is MPYVTMKQLLETGVHFGHQTRRWNPKMRPFIFGARNGIHIIDLQQTVKLYQKAHDFISNVVAGGGRVIFVGTKRQAQESVKKEAERVGQFSVTNRWMGGMLTNFQTIKKSIDRMKTLERMFEDGSIKRFPKKEIVMMGREVAKLNDNLGGIKHMDRLPQAAFIIDPKREEIAVQECRKLGIPIVAVVDTNCDPDVIDYVIPGNDDAIRAIKLFAASIAEACMEGAAQNKDVEPVADKDEKPEAAPVDEAETATETTGE.

The segment at 226–258 is disordered; sequence AQNKDVEPVADKDEKPEAAPVDEAETATETTGE. Residues 229–242 are compositionally biased toward basic and acidic residues; that stretch reads KDVEPVADKDEKPE. A compositionally biased stretch (acidic residues) spans 245–258; the sequence is PVDEAETATETTGE.

It belongs to the universal ribosomal protein uS2 family.

The chain is Small ribosomal subunit protein uS2 from Solidesulfovibrio magneticus (strain ATCC 700980 / DSM 13731 / RS-1) (Desulfovibrio magneticus).